A 360-amino-acid polypeptide reads, in one-letter code: Methylthioribose-1-phosphate isomerase (360 aa).

The Proton donor role is filled by aspartate 252.

Belongs to the eIF-2B alpha/beta/delta subunits family. MtnA subfamily.

The protein resides in the cytoplasm. It is found in the nucleus. The catalysed reaction is 5-(methylsulfanyl)-alpha-D-ribose 1-phosphate = 5-(methylsulfanyl)-D-ribulose 1-phosphate. The protein operates within amino-acid biosynthesis; L-methionine biosynthesis via salvage pathway; L-methionine from S-methyl-5-thio-alpha-D-ribose 1-phosphate: step 1/6. Catalyzes the interconversion of methylthioribose-1-phosphate (MTR-1-P) into methylthioribulose-1-phosphate (MTRu-1-P). The sequence is that of Methylthioribose-1-phosphate isomerase from Trichoplax adhaerens (Trichoplax reptans).